We begin with the raw amino-acid sequence, 452 residues long: Chromosomal replication initiator protein DnaA (452 aa).

Positions 1–73 (MSPNSTLWQT…NELATKYSST (73 aa)) are domain I, interacts with DnaA modulators. Residues 73–102 (TPVRLKFVSQEEVIEEPVADRKLTIDYRQG) form a domain II region. The tract at residues 103 to 323 (NLNSTYTFDS…GALIRLISYA (221 aa)) is domain III, AAA+ region. ATP is bound by residues G147, G149, K150, and T151. Residues 324 to 452 (QTFNLEITMN…VKKIDSPLLK (129 aa)) are domain IV, binds dsDNA.

The protein belongs to the DnaA family. As to quaternary structure, oligomerizes as a right-handed, spiral filament on DNA at oriC.

The protein resides in the cytoplasm. Its function is as follows. Plays an essential role in the initiation and regulation of chromosomal replication. ATP-DnaA binds to the origin of replication (oriC) to initiate formation of the DNA replication initiation complex once per cell cycle. Binds the DnaA box (a 9 base pair repeat at the origin) and separates the double-stranded (ds)DNA. Forms a right-handed helical filament on oriC DNA; dsDNA binds to the exterior of the filament while single-stranded (ss)DNA is stabiized in the filament's interior. The ATP-DnaA-oriC complex binds and stabilizes one strand of the AT-rich DNA unwinding element (DUE), permitting loading of DNA polymerase. After initiation quickly degrades to an ADP-DnaA complex that is not apt for DNA replication. Binds acidic phospholipids. This Acholeplasma laidlawii (strain PG-8A) protein is Chromosomal replication initiator protein DnaA.